The following is a 177-amino-acid chain: Peptide methionine sulfoxide reductase MsrA (177 aa).

Cysteine 11 is an active-site residue.

The protein belongs to the MsrA Met sulfoxide reductase family.

The enzyme catalyses L-methionyl-[protein] + [thioredoxin]-disulfide + H2O = L-methionyl-(S)-S-oxide-[protein] + [thioredoxin]-dithiol. It carries out the reaction [thioredoxin]-disulfide + L-methionine + H2O = L-methionine (S)-S-oxide + [thioredoxin]-dithiol. Has an important function as a repair enzyme for proteins that have been inactivated by oxidation. Catalyzes the reversible oxidation-reduction of methionine sulfoxide in proteins to methionine. The sequence is that of Peptide methionine sulfoxide reductase MsrA from Trichodesmium erythraeum (strain IMS101).